The sequence spans 339 residues: MDQNNSLPPYAQGLASPQGAMTPGIPIFSPMMPYGTGLTPQPIQNTNSLSILEEQQRQQQQQQQQQQQQQQQQQQQQQQQQQQQQQQQQQQQQQQAVAAAAVQQSTSQQATQGTSGQAPQLFHSQTLTTAPLPGTTPLYPSPMTPMTPITPATPASESSGIVPQLQNIVSTVNLGCKLDLKTIALRARNAEYNPKRFAAVIMRIREPRTTALIFSSGKMVCTGAKSEEQSRLAARKYARVVQKLGFPAKFLDFKIQNMVGSCDVKFPIRLEGLVLTHQQFSSYEPELFPGLIYRMIKPRIVLLIFVSGKVVLTGAKVRAEIYEAFENIYPILKGFRKTT.

Disordered regions lie at residues 1 to 21, 36 to 71, and 127 to 159; these read MDQN…QGAM, TGLT…QQQQ, and LTTA…SESS. The segment covering 38–50 has biased composition (polar residues); it reads LTPQPIQNTNSLS. 3 stretches are compositionally biased toward low complexity: residues 57-71, 127-138, and 146-156; these read RQQQ…QQQQ, LTTAPLPGTTPL, and MTPITPATPAS. A run of 2 repeats spans residues 165–241 and 255–332. Asn-167, Arg-203, Lys-218, Asn-257, and Arg-294 together coordinate DNA.

It belongs to the TBP family. Binds DNA as monomer. Component of the TFIID basal transcription factor complex, composed of TATA-box-binding protein TBP, and a number of TBP-associated factors (TAFs), including TAF1, TAF2, TAF3, TAF4, TAF5, TAF6, TAF7, TAF8, TAF9, TAF10, TAF11, TAF12 and TAF13. Part of a TFIID-containing RNA polymerase II pre-initiation complex that is composed of TBP and at least GTF2A1, GTF2A2, GTF2E1, GTF2E2, GTF2F1, GTF2H2, GTF2H3, GTF2H4, GTF2H5, GTF2B, TCEA1, ERCC2, ERCC3, TAF1, TAF2, TAF3, TAF4, TAF5, TAF6, TAF7, TAF8, TAF9, TAF10, TAF11, TAF12 and TAF13. Component of the transcription factor SL1/TIF-IB complex, composed of TBP and at least TAF1A, TAF1B, TAF1C and TAF1D. Association of TBP to form either TFIID or SL1/TIF-IB appears to be mutually exclusive. Interacts with TAF1A, TAF1B and TAF1C. Interacts with TFIIB, NCOA6, DRAP1, DR1 and ELF3. Interacts with SPIB, SNAPC1, SNAPC2 and SNAPC4. Interacts with UTF1. Interacts with BRF2; this interaction promotes recruitment of BRF2 to TATA box-containing promoters. Interacts with UBTFD. Interacts with GPBP1D. Interacts with CITED2. Interacts with ATF7IP. Interacts with LLPH. Interacts with HSF1 (via transactivation domain). Interacts with GTF2B (via C-terminus); this interaction with promoter-bound TBP guides RNA polymerase II into the pre-initiation complex (PIC). Interacts with PAX5. Interacts with MSX1; the interaction may inhibit MSX1 autoinactivation. As to quaternary structure, (Microbial infection) Interacts with HIV-1 Tat. In terms of assembly, (Microbial infection) Interacts with herpes simplex virus 1 ICP4. (Microbial infection) Interacts with herpes simplex virus 2 ICP4. As to quaternary structure, (Microbial infection) Interacts with human adenovirus E1A protein; this interaction probably disrupts the TBP-TATA complex. In terms of tissue distribution, widely expressed, with levels highest in the testis and ovary.

Its subcellular location is the nucleus. Its function is as follows. The TFIID basal transcription factor complex plays a major role in the initiation of RNA polymerase II (Pol II)-dependent transcription. TFIID recognizes and binds promoters with or without a TATA box via its subunit TBP, a TATA-box-binding protein, and promotes assembly of the pre-initiation complex (PIC). The TFIID complex consists of TBP and TBP-associated factors (TAFs), including TAF1, TAF2, TAF3, TAF4, TAF5, TAF6, TAF7, TAF8, TAF9, TAF10, TAF11, TAF12 and TAF13. The TFIID complex structure can be divided into 3 modules TFIID-A, TFIID-B, and TFIID-C. TBP forms the TFIID-A module together with TAF3 and TAF5. TBP is a general transcription factor that functions at the core of the TFIID complex. During assembly of the core PIC on the promoter, as part of TFIID, TBP binds to and also bends promoter DNA, irrespective of whether the promoter contains a TATA box. Component of a BRF2-containing transcription factor complex that regulates transcription mediated by RNA polymerase III. Component of the transcription factor SL1/TIF-IB complex, which is involved in the assembly of the PIC during RNA polymerase I-dependent transcription. The rate of PIC formation probably is primarily dependent on the rate of association of SL1 with the rDNA promoter. SL1 is involved in stabilization of nucleolar transcription factor 1/UBTF on rDNA. This is TATA-box-binding protein (TBP) from Homo sapiens (Human).